The sequence spans 268 residues: 1D-myo-inositol 2-acetamido-2-deoxy-alpha-D-glucopyranoside deacetylase (268 aa).

Positions 7, 10, and 142 each coordinate Zn(2+).

It belongs to the MshB deacetylase family. The cofactor is Zn(2+).

It carries out the reaction 1D-myo-inositol 2-acetamido-2-deoxy-alpha-D-glucopyranoside + H2O = 1D-myo-inositol 2-amino-2-deoxy-alpha-D-glucopyranoside + acetate. Catalyzes the deacetylation of 1D-myo-inositol 2-acetamido-2-deoxy-alpha-D-glucopyranoside (GlcNAc-Ins) in the mycothiol biosynthesis pathway. This chain is 1D-myo-inositol 2-acetamido-2-deoxy-alpha-D-glucopyranoside deacetylase, found in Saccharomonospora viridis (strain ATCC 15386 / DSM 43017 / JCM 3036 / CCUG 5913 / NBRC 12207 / NCIMB 9602 / P101) (Thermoactinomyces viridis).